The following is a 212-amino-acid chain: Cytidylate kinase (212 aa).

7 to 15 (GPAASGKGT) is an ATP binding site.

Belongs to the cytidylate kinase family. Type 1 subfamily.

The protein resides in the cytoplasm. It catalyses the reaction CMP + ATP = CDP + ADP. The catalysed reaction is dCMP + ATP = dCDP + ADP. In Nitrobacter winogradskyi (strain ATCC 25391 / DSM 10237 / CIP 104748 / NCIMB 11846 / Nb-255), this protein is Cytidylate kinase.